Here is a 547-residue protein sequence, read N- to C-terminus: TBCC domain-containing protein 1 (547 aa).

The C-CAP/cofactor C-like domain maps to 304–435 (PHTHRMVVMS…LEDHMAHTGL (132 aa)).

The protein belongs to the TBCC family.

The protein resides in the cytoplasm. The protein localises to the cytoskeleton. It localises to the microtubule organizing center. It is found in the centrosome. Its subcellular location is the spindle pole. May play a role in the regulation of centrosome and Golgi apparatus positioning. The protein is TBCC domain-containing protein 1 (tbccd1) of Xenopus tropicalis (Western clawed frog).